The sequence spans 418 residues: MKATDLFHVTALVAGALALEHQQPLIGDLSQDLNHIIDSSPLLSFHRALVQIPSISEHEKNVGEYVLDFLSSQNLTVEKQIVTPESDTEEERFNIYAYVGKNRQPDVLVTSHIDTVPPFIPYSLHAPTSGTSFIRTDLVIAGRGTVDAKASVAAIVFAALETLDENPNASIGLLFDVGEENSGVGMKHFSNSELNPTPPTYHTVIFGEPTELSLVAAHKGTLGFKLVAEGKAAHSGYPWLGESAISSLIPVLAHLDTLQDLPPEKGGLLRSETLGKSTLNIGRVHGGIAANVVPAHAEAAISVRLAAGTPEDTRTIIERAVAKVTSGDRSVYPDFGDRKAGAPPQYFDVDVDGFEVITVNYGTDAPALKIHDQRTQRVKRYLYGPGSILVAHADNEAITVGELEEAVRGYKRLIAASL.

A signal peptide spans 1 to 18 (MKATDLFHVTALVAGALA). Asn74 carries N-linked (GlcNAc...) asparagine glycosylation. Asp147 provides a ligand contact to Zn(2+). Residue Asn168 is glycosylated (N-linked (GlcNAc...) asparagine). Residue Glu179 is the Proton acceptor of the active site. Zn(2+) is bound at residue Glu180.

Belongs to the peptidase M20A family. The cofactor is Zn(2+).

The protein resides in the secreted. The sequence is that of Probable carboxypeptidase AO090166000075 from Aspergillus oryzae (strain ATCC 42149 / RIB 40) (Yellow koji mold).